A 245-amino-acid polypeptide reads, in one-letter code: Ribonuclease PH (245 aa).

Phosphate is bound by residues arginine 86 and 124–126; that span reads GTR.

The protein belongs to the RNase PH family. In terms of assembly, homohexameric ring arranged as a trimer of dimers.

It catalyses the reaction tRNA(n+1) + phosphate = tRNA(n) + a ribonucleoside 5'-diphosphate. Its function is as follows. Phosphorolytic 3'-5' exoribonuclease that plays an important role in tRNA 3'-end maturation. Removes nucleotide residues following the 3'-CCA terminus of tRNAs; can also add nucleotides to the ends of RNA molecules by using nucleoside diphosphates as substrates, but this may not be physiologically important. Probably plays a role in initiation of 16S rRNA degradation (leading to ribosome degradation) during starvation. This chain is Ribonuclease PH, found in Bacillus cereus (strain G9842).